The primary structure comprises 197 residues: Guanylate kinase (197 aa).

Position 2 is an N-acetylserine (serine 2). Positions 4 to 186 (PRPVVLSGPS…AYAELKEALS (183 aa)) constitute a Guanylate kinase-like domain. An ATP-binding site is contributed by 14-19 (GAGKST). Residue 37–51 (SHTTRNPRPGEENGK) coordinates substrate. Catalysis depends on residues arginine 44, arginine 137, and arginine 148. ATP is bound at residue arginine 137. 171–172 (ND) lines the ATP pocket.

The protein belongs to the guanylate kinase family. As to quaternary structure, monomer. Interacts with RD3. Widely expressed.

The protein resides in the photoreceptor inner segment. It localises to the cytoplasm. The protein localises to the cytosol. It is found in the mitochondrion. It carries out the reaction GMP + ATP = GDP + ADP. With respect to regulation, up-regulated by RD3. Functionally, catalyzes the phosphorylation of GMP to GDP. Essential enzyme for recycling GMP and indirectly, cyclic GMP (cGMP). Involved in the cGMP metabolism in photoreceptors. It may also have a role in the survival and growth progression of some tumors. In addition to its physiological role, GUK1 is essential for converting prodrugs used for the treatment of cancers and viral infections into their pharmacologically active metabolites, most notably acyclovir, ganciclovir, and 6-thioguanine and its closely related analog 6-mercaptopurine. The sequence is that of Guanylate kinase from Homo sapiens (Human).